Reading from the N-terminus, the 509-residue chain is Kynureninase 1 (509 aa).

Pyridoxal 5'-phosphate is bound by residues Leu154, Thr155, Phe183 to Asp186, Asp270, His273, and Tyr295. Lys296 is modified (N6-(pyridoxal phosphate)lysine). Residues Trp345 and Asn373 each coordinate pyridoxal 5'-phosphate.

The protein belongs to the kynureninase family. Homodimer. Pyridoxal 5'-phosphate is required as a cofactor.

Its subcellular location is the cytoplasm. The enzyme catalyses L-kynurenine + H2O = anthranilate + L-alanine + H(+). It catalyses the reaction 3-hydroxy-L-kynurenine + H2O = 3-hydroxyanthranilate + L-alanine + H(+). It participates in amino-acid degradation; L-kynurenine degradation; L-alanine and anthranilate from L-kynurenine: step 1/1. The protein operates within cofactor biosynthesis; NAD(+) biosynthesis; quinolinate from L-kynurenine: step 2/3. Catalyzes the cleavage of L-kynurenine (L-Kyn) and L-3-hydroxykynurenine (L-3OHKyn) into anthranilic acid (AA) and 3-hydroxyanthranilic acid (3-OHAA), respectively. This Chaetomium globosum (strain ATCC 6205 / CBS 148.51 / DSM 1962 / NBRC 6347 / NRRL 1970) (Soil fungus) protein is Kynureninase 1.